Consider the following 89-residue polypeptide: Small ribosomal subunit protein uS15 (89 aa).

This sequence belongs to the universal ribosomal protein uS15 family. As to quaternary structure, part of the 30S ribosomal subunit. Forms a bridge to the 50S subunit in the 70S ribosome, contacting the 23S rRNA.

Its function is as follows. One of the primary rRNA binding proteins, it binds directly to 16S rRNA where it helps nucleate assembly of the platform of the 30S subunit by binding and bridging several RNA helices of the 16S rRNA. In terms of biological role, forms an intersubunit bridge (bridge B4) with the 23S rRNA of the 50S subunit in the ribosome. This is Small ribosomal subunit protein uS15 from Rhizobium leguminosarum bv. trifolii (strain WSM2304).